The chain runs to 736 residues: DEAD-box ATP-dependent RNA helicase 21 (736 aa).

Residues 14-38 adopt a coiled-coil conformation; sequence LTREEREKLALERRQAAVTDQRRSA. The segment covering 25–38 has biased composition (basic and acidic residues); that stretch reads ERRQAAVTDQRRSA. Disordered regions lie at residues 25–178 and 231–263; these read ERRQ…PKKR and KVAA…DKKE. The span at 46-58 shows a compositional bias: pro residues; the sequence is PRPPPPPPPPLSN. Composition is skewed to basic and acidic residues over residues 64–166 and 231–252; these read SSSH…DAIK and KVAA…GLDD. The stretch at 137–167 forms a coiled coil; sequence DRDRERGDREKDRLEKMAEREREKELDAIKE. The Q motif signature appears at 315-343; it reads RKWSESKLGTELLRAVEKAGYKEPSPIQM. One can recognise a Helicase ATP-binding domain in the interval 346-541; sequence IPLGLQQRDV…RKYLRNPVVV (196 aa). An ATP-binding site is contributed by 359–366; it reads AETGSGKT. Positions 472-475 match the DEAD box motif; that stretch reads DEAD. The Helicase C-terminal domain maps to 568 to 712; that stretch reads RLQKILTDLG…PVPPELARHE (145 aa). A disordered region spans residues 704 to 736; it reads VPPELARHEASKFKPGSVPDRPPRRNDTVYATH.

The protein belongs to the DEAD box helicase family. DDX23/PRP28 subfamily.

The protein resides in the cytoplasm. It localises to the nucleus. The enzyme catalyses ATP + H2O = ADP + phosphate + H(+). In terms of biological role, ATP-dependent RNA helicase involved in mRNA splicing. May destabilize the U1/5'-splice site duplex to permit an effective competition for the 5'-splice site by the U6 snRNA, resulting in the switch between U1 and U6 at the 5'-splice site. May also act to unwind the U4/U6 base-pairing interaction in the U4/U6/U5 snRNP, facilitating the first covalent step of splicing. This is DEAD-box ATP-dependent RNA helicase 21 from Oryza sativa subsp. japonica (Rice).